The primary structure comprises 398 residues: Autophagy-related protein 39 (398 aa).

The ATG8-binding motif lies at 8 to 11; it reads WNLV. The disordered stretch occupies residues 15–50; it reads RLRKGREGEEQSSKSEISLDSLHESSFAGEDDEDFD. Residues 52-59 carry the ATG11-binding motif; that stretch reads DVLSNTSS. Residues 148–164 form a helical membrane-spanning segment; the sequence is VIMLSSLLSMTFSYLAL.

As to quaternary structure, interacts with ATG8 and ATG11.

It is found in the endoplasmic reticulum membrane. The protein localises to the preautophagosomal structure membrane. In terms of biological role, acts as a receptor for reticulophagy and nucleophagy. Directs autophagic sequestration of double-membrane vesicles derived from the nuclear envelope and perinuclear endoplasmic reticulum (pnER) into autophagosomes. Is not required for the cytoplasm-to-vacuole targeting pathway, mitophagy, pexophagy, and non-selective autophagy. The protein is Autophagy-related protein 39 of Saccharomyces cerevisiae (strain ATCC 204508 / S288c) (Baker's yeast).